Consider the following 91-residue polypeptide: Putative defensin-like protein 221 (91 aa).

Residues 1-19 (MKTLFFFLTIAVLVSSCTS) form the signal peptide. 3 disulfides stabilise this stretch: Cys61/Cys78, Cys64/Cys83, and Cys68/Cys85.

Belongs to the DEFL family.

The protein localises to the secreted. The polypeptide is Putative defensin-like protein 221 (Arabidopsis thaliana (Mouse-ear cress)).